The following is a 243-amino-acid chain: Pleckstrin homology domain-containing family B member 1 (243 aa).

The PH domain maps to 21-128 (ALVRGGWLWR…WKTALMEANS (108 aa)).

In terms of assembly, binds transducins. Homodimer. Interacts (via PH domain) with MYO1C. Interacts (via PH domain) with MYO7A. In terms of tissue distribution, highly expressed in retina and brain. In retina, abundantly expressed in photoreceptors. Isoform 4 is the predominant isoform expressed in mature olfactory receptor neurons and vestibular and cochlear hair cells. Also expressed in cells with possible sensory function, including peripheral retinal ganglion cells, cochlear interdental cells, and neurons of the circumventricular organ (at protein level).

The protein resides in the membrane. It localises to the cytoplasm. In Mus musculus (Mouse), this protein is Pleckstrin homology domain-containing family B member 1 (Plekhb1).